We begin with the raw amino-acid sequence, 255 residues long: 1-(5-phosphoribosyl)-5-[(5-phosphoribosylamino)methylideneamino] imidazole-4-carboxamide isomerase (255 aa).

Residue Asp8 is the Proton acceptor of the active site. Catalysis depends on Asp129, which acts as the Proton donor.

It belongs to the HisA/HisF family.

Its subcellular location is the cytoplasm. The catalysed reaction is 1-(5-phospho-beta-D-ribosyl)-5-[(5-phospho-beta-D-ribosylamino)methylideneamino]imidazole-4-carboxamide = 5-[(5-phospho-1-deoxy-D-ribulos-1-ylimino)methylamino]-1-(5-phospho-beta-D-ribosyl)imidazole-4-carboxamide. It participates in amino-acid biosynthesis; L-histidine biosynthesis; L-histidine from 5-phospho-alpha-D-ribose 1-diphosphate: step 4/9. In Prochlorococcus marinus subsp. pastoris (strain CCMP1986 / NIES-2087 / MED4), this protein is 1-(5-phosphoribosyl)-5-[(5-phosphoribosylamino)methylideneamino] imidazole-4-carboxamide isomerase.